Consider the following 302-residue polypeptide: 4-hydroxy-tetrahydrodipicolinate synthase (302 aa).

Pyruvate is bound at residue threonine 49. Tyrosine 137 acts as the Proton donor/acceptor in catalysis. Residue lysine 166 is the Schiff-base intermediate with substrate of the active site. Pyruvate is bound at residue isoleucine 208.

Belongs to the DapA family. As to quaternary structure, homotetramer; dimer of dimers.

It is found in the cytoplasm. It catalyses the reaction L-aspartate 4-semialdehyde + pyruvate = (2S,4S)-4-hydroxy-2,3,4,5-tetrahydrodipicolinate + H2O + H(+). It participates in amino-acid biosynthesis; L-lysine biosynthesis via DAP pathway; (S)-tetrahydrodipicolinate from L-aspartate: step 3/4. Catalyzes the condensation of (S)-aspartate-beta-semialdehyde [(S)-ASA] and pyruvate to 4-hydroxy-tetrahydrodipicolinate (HTPA). The chain is 4-hydroxy-tetrahydrodipicolinate synthase from Chloroherpeton thalassium (strain ATCC 35110 / GB-78).